The sequence spans 666 residues: Fructose-1,6-bisphosphatase class 3 (666 aa).

This sequence belongs to the FBPase class 3 family. The cofactor is Mn(2+).

The catalysed reaction is beta-D-fructose 1,6-bisphosphate + H2O = beta-D-fructose 6-phosphate + phosphate. The protein operates within carbohydrate biosynthesis; gluconeogenesis. In Parabacteroides distasonis (strain ATCC 8503 / DSM 20701 / CIP 104284 / JCM 5825 / NCTC 11152), this protein is Fructose-1,6-bisphosphatase class 3.